The chain runs to 351 residues: uncharacterized protein (351 aa).

Residues Lys-25–Val-67 form a disordered region. The span at Pro-33–Lys-55 shows a compositional bias: low complexity.

This is an uncharacterized protein from Escherichia coli (strain K12).